Here is a 325-residue protein sequence, read N- to C-terminus: Peroxidase 68 (325 aa).

A signal peptide spans 1–28 (MECYEQSRQRAAFVVLLFIVMLGSQAQA). Position 29 is a pyrrolidone carboxylic acid (Gln-29). 4 disulfides stabilise this stretch: Cys-39/Cys-119, Cys-72/Cys-77, Cys-125/Cys-321, and Cys-205/Cys-230. The active-site Proton acceptor is His-70. Ca(2+) is bound by residues Asp-71, Val-74, Gly-76, Asp-78, and Ser-80. Asn-99 carries N-linked (GlcNAc...) asparagine glycosylation. Pro-168 lines the substrate pocket. A heme b-binding site is contributed by His-198. Thr-199 is a binding site for Ca(2+). A glycan (N-linked (GlcNAc...) asparagine) is linked at Asn-214. Asp-245, Thr-248, and Asp-253 together coordinate Ca(2+).

This sequence belongs to the peroxidase family. Classical plant (class III) peroxidase subfamily. The cofactor is heme b. It depends on Ca(2+) as a cofactor.

The protein localises to the secreted. It catalyses the reaction 2 a phenolic donor + H2O2 = 2 a phenolic radical donor + 2 H2O. Functionally, removal of H(2)O(2), oxidation of toxic reductants, biosynthesis and degradation of lignin, suberization, auxin catabolism, response to environmental stresses such as wounding, pathogen attack and oxidative stress. These functions might be dependent on each isozyme/isoform in each plant tissue. The chain is Peroxidase 68 (PER68) from Arabidopsis thaliana (Mouse-ear cress).